We begin with the raw amino-acid sequence, 430 residues long: MKLKINSQGLKGHLKVPGDKSISHRSIMFGSIAKGKTIIHDILRGEDVLSTIEAFRALGVEIEDDGQVITVHGQGISKLKEPEKALDMGNSGTSTRLLSGILAGLPFETTLFGDDSLSKRPMDRVATPLQMMGAEIVGQTDKVKLPMTIKGSAHLKAIDYVLPVASAQVKSAVIFAALQAEGLTKVVEKEKTRSHTEEMLVQFGGEIKVSDKTSLVPGGQKLMGQEVTVPGDISSAAFWLVAGLVVENSELILENVGINETRTGILEVIQAMGGQLEILEQDEVAKAATLKVKASQLKGTEISGDLIPRLIDELPIIALLATQAEGKTIIRDAAELKVKETDRIAVVADALNSMGANIEPTDDGMIIQGGTKLHAPENAINTLGDHRIGMMVAIAALLVENGEIELERAEAIQTSYPSFFDDLEKLSENL.

Lysine 20, serine 21, and arginine 25 together coordinate 3-phosphoshikimate. Residue lysine 20 coordinates phosphoenolpyruvate. The phosphoenolpyruvate site is built by glycine 92 and arginine 120. Positions 166, 168, 312, and 339 each coordinate 3-phosphoshikimate. Glutamine 168 contacts phosphoenolpyruvate. Aspartate 312 acts as the Proton acceptor in catalysis. Phosphoenolpyruvate is bound by residues arginine 343 and arginine 387.

It belongs to the EPSP synthase family. Monomer.

It is found in the cytoplasm. The enzyme catalyses 3-phosphoshikimate + phosphoenolpyruvate = 5-O-(1-carboxyvinyl)-3-phosphoshikimate + phosphate. The protein operates within metabolic intermediate biosynthesis; chorismate biosynthesis; chorismate from D-erythrose 4-phosphate and phosphoenolpyruvate: step 6/7. In terms of biological role, catalyzes the transfer of the enolpyruvyl moiety of phosphoenolpyruvate (PEP) to the 5-hydroxyl of shikimate-3-phosphate (S3P) to produce enolpyruvyl shikimate-3-phosphate and inorganic phosphate. The polypeptide is 3-phosphoshikimate 1-carboxyvinyltransferase (Lactococcus lactis subsp. cremoris (strain SK11)).